A 233-amino-acid polypeptide reads, in one-letter code: Large ribosomal subunit protein uL1 (233 aa).

The protein belongs to the universal ribosomal protein uL1 family. As to quaternary structure, part of the 50S ribosomal subunit.

In terms of biological role, binds directly to 23S rRNA. The L1 stalk is quite mobile in the ribosome, and is involved in E site tRNA release. Its function is as follows. Protein L1 is also a translational repressor protein, it controls the translation of the L11 operon by binding to its mRNA. In Shewanella halifaxensis (strain HAW-EB4), this protein is Large ribosomal subunit protein uL1.